The chain runs to 350 residues: S-adenosylmethionine:tRNA ribosyltransferase-isomerase (350 aa).

Belongs to the QueA family. As to quaternary structure, monomer.

The protein localises to the cytoplasm. The enzyme catalyses 7-aminomethyl-7-carbaguanosine(34) in tRNA + S-adenosyl-L-methionine = epoxyqueuosine(34) in tRNA + adenine + L-methionine + 2 H(+). It functions in the pathway tRNA modification; tRNA-queuosine biosynthesis. In terms of biological role, transfers and isomerizes the ribose moiety from AdoMet to the 7-aminomethyl group of 7-deazaguanine (preQ1-tRNA) to give epoxyqueuosine (oQ-tRNA). The protein is S-adenosylmethionine:tRNA ribosyltransferase-isomerase of Aliivibrio fischeri (strain MJ11) (Vibrio fischeri).